Consider the following 223-residue polypeptide: Type III pantothenate kinase (223 aa).

Position 17 to 24 (17 to 24 (DIGNTRIH)) interacts with ATP. Substrate-binding positions include Y81 and 85–88 (GIDR). Residue D87 is the Proton acceptor of the active site. D102 is a K(+) binding site. ATP is bound at residue S105. T157 lines the substrate pocket.

The protein belongs to the type III pantothenate kinase family. As to quaternary structure, homodimer. It depends on NH4(+) as a cofactor. The cofactor is K(+).

The protein resides in the cytoplasm. It catalyses the reaction (R)-pantothenate + ATP = (R)-4'-phosphopantothenate + ADP + H(+). Its pathway is cofactor biosynthesis; coenzyme A biosynthesis; CoA from (R)-pantothenate: step 1/5. Its function is as follows. Catalyzes the phosphorylation of pantothenate (Pan), the first step in CoA biosynthesis. This chain is Type III pantothenate kinase, found in Helicobacter pylori (strain J99 / ATCC 700824) (Campylobacter pylori J99).